A 159-amino-acid polypeptide reads, in one-letter code: Nucleotide-binding protein PSPTO_4393 (159 aa).

It belongs to the YajQ family.

Functionally, nucleotide-binding protein. This Pseudomonas syringae pv. tomato (strain ATCC BAA-871 / DC3000) protein is Nucleotide-binding protein PSPTO_4393.